The primary structure comprises 164 residues: General odorant-binding protein 1 (164 aa).

A signal peptide spans 1 to 18; it reads MWKLVVVLTVNLLQGALT. Cystine bridges form between Cys-37–Cys-72, Cys-68–Cys-126, and Cys-115–Cys-135.

Belongs to the PBP/GOBP family. Homodimer. Antenna.

Present in the aqueous fluid surrounding olfactory sensory dendrites and are thought to aid in the capture and transport of hydrophobic odorants into and through this fluid. This chain is General odorant-binding protein 1, found in Bombyx mori (Silk moth).